Reading from the N-terminus, the 216-residue chain is Uracil-DNA glycosylase (216 aa).

Aspartate 59 (proton acceptor) is an active-site residue.

Belongs to the uracil-DNA glycosylase (UDG) superfamily. UNG family.

It localises to the cytoplasm. It carries out the reaction Hydrolyzes single-stranded DNA or mismatched double-stranded DNA and polynucleotides, releasing free uracil.. Functionally, excises uracil residues from the DNA which can arise as a result of misincorporation of dUMP residues by DNA polymerase or due to deamination of cytosine. This chain is Uracil-DNA glycosylase, found in Staphylococcus epidermidis (strain ATCC 35984 / DSM 28319 / BCRC 17069 / CCUG 31568 / BM 3577 / RP62A).